Reading from the N-terminus, the 158-residue chain is Endoribonuclease YbeY (158 aa).

Positions 119, 123, and 129 each coordinate Zn(2+).

The protein belongs to the endoribonuclease YbeY family. It depends on Zn(2+) as a cofactor.

It is found in the cytoplasm. In terms of biological role, single strand-specific metallo-endoribonuclease involved in late-stage 70S ribosome quality control and in maturation of the 3' terminus of the 16S rRNA. This chain is Endoribonuclease YbeY, found in Chlamydia caviae (strain ATCC VR-813 / DSM 19441 / 03DC25 / GPIC) (Chlamydophila caviae).